Here is a 287-residue protein sequence, read N- to C-terminus: uncharacterized protein (287 aa).

The 107-residue stretch at 133-239 (CEVGKTKKMT…KNIIGISIVQ (107 aa)) folds into the THUMP domain. The tract at residues 257 to 287 (ENTKSIPNDSKLDNFDRDKNQIINDKAEHAE) is disordered. Basic and acidic residues predominate over residues 266–287 (SKLDNFDRDKNQIINDKAEHAE).

This is an uncharacterized protein from Schizosaccharomyces pombe (strain 972 / ATCC 24843) (Fission yeast).